Here is a 163-residue protein sequence, read N- to C-terminus: Staphylokinase (163 aa).

Residues 1 to 27 (MLKRSLLFLTVLLLLFSFSSITNEVSA) form the signal peptide.

This sequence belongs to the staphylokinase family.

The protein resides in the secreted. Potent plasminogen activator that converts plasminogen into plasmin. It forms a 1:1 complex with plasmin, which in turn activates other plasminogen molecules. The protein is Staphylokinase of Staphylococcus phage S phi-C (Bacteriophage S phi-C).